Reading from the N-terminus, the 285-residue chain is MGGMLGFFVRQLTFMPKPLPQNVRLDGKTAIVTGANVGLGLEASKEMASHGLARVILGVRTVSKGEAAKQEILKQSPNCDVQVWPVDHESFESMVAFGERAQSLDRLDIVILCAGVKNLVFSLSKTGHEQNVQVNHLGTSLLSLLLLKPLKDTAAKTGSPSRLTIVASEVHFWTPFDERKAPSILARLDEKDSFRGMERYNTSKLLNILWMRELSSRVTGNVVINAVNPGLCASALHRTDPTPGLAYLNKIFAWTPAQGGHNLTYAATQHVDEPGAYLSEQHLEK.

The NADP(+) site is built by leucine 39, lysine 64, and aspartate 87. Active-site proton donor residues include serine 168 and tyrosine 200. NADP(+) contacts are provided by tyrosine 200, lysine 204, and serine 234. Lysine 204 acts as the Lowers pKa of active site Tyr in catalysis.

It belongs to the short-chain dehydrogenases/reductases (SDR) family.

It functions in the pathway phytotoxin biosynthesis. Short chain dehydrogenase; part of the gene cluster that mediates the biosynthesis of the phytotoxin solanapyrone, a causal agent of early blight disease of potato and tomato. The prosolanapyrone synthase sol1 is a polyketide synthase that produces the octaketide desmethylprosolanapyrone I via sequential condensations of 7 malonyl-CoA units with one acetyl-CoA unit, and one methylation step. The octaketide backbone is further methylated by the sol2 O-methyltransferase to yield prosolanapyrone I. Prosolanapyrone I is hydroxylated to prosolanapyrone II by the cytochrome P450 monooxygenase sol6. The solanapyrone synthase sol5 then catalyzes the oxidation of prosolanapyrone II and the subsequent Diels Alder cycloisomerization of the product prosolanapyrone III to solanapyrones A and D. Solanapyrones A and D are then converted into solanapyrones B and E, respectively, by the sol3 dehydrogenase. The sequence is that of Short chain dehydrogenase sol3 (sol3) from Alternaria solani.